The sequence spans 142 residues: Large ribosomal subunit protein uL11 (142 aa).

It belongs to the universal ribosomal protein uL11 family. As to quaternary structure, part of the ribosomal stalk of the 50S ribosomal subunit. Interacts with L10 and the large rRNA to form the base of the stalk. L10 forms an elongated spine to which L12 dimers bind in a sequential fashion forming a multimeric L10(L12)X complex. One or more lysine residues are methylated.

Forms part of the ribosomal stalk which helps the ribosome interact with GTP-bound translation factors. The polypeptide is Large ribosomal subunit protein uL11 (Mesoplasma florum (strain ATCC 33453 / NBRC 100688 / NCTC 11704 / L1) (Acholeplasma florum)).